A 114-amino-acid polypeptide reads, in one-letter code: uncharacterized protein (114 aa).

Functionally, possibly involved in pGI2 replication mechanism. This is an uncharacterized protein from Bacillus thuringiensis.